Consider the following 307-residue polypeptide: MADLKAVQEADVRQRPQASIKLFWKELSAVVKIGIVNSNLITTFAGMWLAFYFTGERFLENLHIVFFTLFGAALVIAGSCSINNFIDRDIDQHMERTKTRPTVTGTMEPRRVLWLGVTLVAIGTMSLLMTTVTAAIVGLIGVVTYVFLYTLWTKRNYTLNTVVGSISGAVPPVIGWTAVDSDFHIVPLILFLIMFLWQPPHFLALAMKRCEEYRAAGIPMLPVVHGFEMTKRQIIVWVACLLPLPFYLFSLGIPFLIVATVLNVGWLLLGLWGLKMKDDIKWAKLMFVYSLNYLTILFVAMVIATIW.

Transmembrane regions (helical) follow at residues 33–53 (IGIV…AFYF), 62–82 (LHIV…SCSI), 111–131 (RVLW…LMTT), 132–152 (VTAA…YTLW), 159–179 (LNTV…WTAV), 185–205 (IVPL…FLAL), 229–249 (MTKR…FYLF), 251–271 (LGIP…LLGL), and 287–307 (FVYS…ATIW).

The protein belongs to the UbiA prenyltransferase family. Protoheme IX farnesyltransferase subfamily. As to quaternary structure, interacts with CtaA.

Its subcellular location is the cell membrane. The catalysed reaction is heme b + (2E,6E)-farnesyl diphosphate + H2O = Fe(II)-heme o + diphosphate. It functions in the pathway porphyrin-containing compound metabolism; heme O biosynthesis; heme O from protoheme: step 1/1. Converts heme B (protoheme IX) to heme O by substitution of the vinyl group on carbon 2 of heme B porphyrin ring with a hydroxyethyl farnesyl side group. The protein is Protoheme IX farnesyltransferase of Geobacillus thermodenitrificans (strain NG80-2).